Here is a 464-residue protein sequence, read N- to C-terminus: Glutamate--tRNA ligase (464 aa).

The 'HIGH' region motif lies at 11 to 21; the sequence is PSPTGFIHLGN. Residues 243–247 carry the 'KMSKS' region motif; it reads KMSKR. Position 246 (Lys-246) interacts with ATP.

It belongs to the class-I aminoacyl-tRNA synthetase family. Glutamate--tRNA ligase type 1 subfamily. In terms of assembly, monomer.

It is found in the cytoplasm. It catalyses the reaction tRNA(Glu) + L-glutamate + ATP = L-glutamyl-tRNA(Glu) + AMP + diphosphate. Its function is as follows. Catalyzes the attachment of glutamate to tRNA(Glu) in a two-step reaction: glutamate is first activated by ATP to form Glu-AMP and then transferred to the acceptor end of tRNA(Glu). The polypeptide is Glutamate--tRNA ligase (Polaromonas naphthalenivorans (strain CJ2)).